Consider the following 832-residue polypeptide: Golgin subfamily A member 6-like protein 24 (832 aa).

Disordered regions lie at residues 1–107 (MWPQ…QEAL), 303–333 (QEQE…MRRQ), 351–431 (MHEQ…EMWR), 508–652 (QEEM…EQEE), and 664–832 (QEEM…MQEH). Residues 13-27 (LPTHPHLPTHPHLPT) are compositionally biased toward basic residues. Residues 37–58 (MSKETRQSKLAEAKEQLTDHHP) are compositionally biased toward basic and acidic residues. Polar residues-rich tracts occupy residues 59–69 (QTNPSVGTAAS) and 77–89 (NNGT…TSGG). A compositionally biased stretch (basic and acidic residues) spans 92 to 107 (SPEDEQKASHQHQEAL). The stretch at 163-828 (LEQALSAVAT…EVRLRQQEEK (666 aa)) forms a coiled coil. Composition is skewed to basic and acidic residues over residues 664-684 (QEEM…KMWE) and 692-832 (QEEK…MQEH).

Belongs to the GOLGA6 family.

This is Golgin subfamily A member 6-like protein 24 from Homo sapiens (Human).